Here is a 364-residue protein sequence, read N- to C-terminus: A-type ATP synthase subunit C (364 aa).

Belongs to the V-ATPase V0D/AC39 subunit family. As to quaternary structure, has multiple subunits with at least A(3), B(3), C, D, E, F, H, I and proteolipid K(x).

Its subcellular location is the cell membrane. Component of the A-type ATP synthase that produces ATP from ADP in the presence of a proton gradient across the membrane. This chain is A-type ATP synthase subunit C, found in Desulfurococcus sp. (strain SY).